The primary structure comprises 187 residues: Elongation factor P (187 aa).

The protein belongs to the elongation factor P family.

The protein localises to the cytoplasm. The protein operates within protein biosynthesis; polypeptide chain elongation. Involved in peptide bond synthesis. Stimulates efficient translation and peptide-bond synthesis on native or reconstituted 70S ribosomes in vitro. Probably functions indirectly by altering the affinity of the ribosome for aminoacyl-tRNA, thus increasing their reactivity as acceptors for peptidyl transferase. The sequence is that of Elongation factor P (efp) from Helicobacter pylori (strain J99 / ATCC 700824) (Campylobacter pylori J99).